Reading from the N-terminus, the 805-residue chain is Muscarinic acetylcholine receptor DM1 (805 aa).

Residues 1–100 (MEPVMSLALA…GFETKGPRYS (100 aa)) are Extracellular-facing. Residues 27–43 (TSTTTTTTTTTSTTTTT) are compositionally biased toward low complexity. Positions 27–47 (TSTTTTTTTTTSTTTTTASPA) are disordered. 3 N-linked (GlcNAc...) asparagine glycosylation sites follow: asparagine 65, asparagine 84, and asparagine 87. A helical transmembrane segment spans residues 101 to 121 (LASMVVMGFVAAILSTVTVAG). Residues 122-141 (NVMVMISFKIDKQLQTISNY) lie on the Cytoplasmic side of the membrane. The chain crosses the membrane as a helical span at residues 142-162 (FLFSLAIADFAIGAISMPLFA). Over 163–177 (VTTILGYWPLGPIVC) the chain is Extracellular. The chain crosses the membrane as a helical span at residues 178-198 (DTWLALDYLASNASVLNLLII). Residues 199 to 220 (SFDRYFSVTRPLTYRAKRTTNR) are Cytoplasmic-facing. Residues 221–241 (AAVMIGAAWGISLLLWPPWIY) traverse the membrane as a helical segment. Residues 242–266 (SWPYIEGKRTVPKDECYIQFIETNQ) are Extracellular-facing. Residues 267–287 (YITFGTALAAFYFPVTIMCFL) traverse the membrane as a helical segment. The Cytoplasmic portion of the chain corresponds to 288–718 (YWRIWRETKK…KRQESKAAKT (431 aa)). Disordered regions lie at residues 302 to 322 (LPNL…SDEN), 340 to 359 (GNDH…DAES), and 507 to 530 (GNGN…VNGN). Composition is skewed to basic and acidic residues over residues 308-318 (GKKDSSKRSNS) and 341-353 (NDHD…RSES). Residues 507–525 (GNGNGAINNNNNASHNGNG) show a composition bias toward low complexity. The helical transmembrane segment at 719 to 739 (LSAILLSFIITWTPYNILVLI) threads the bilayer. Topologically, residues 740-752 (KPLTTCSDCIPTE) are extracellular. A helical membrane pass occupies residues 753-773 (LWDFFYALCYINSTINPMCYA). The Cytoplasmic segment spans residues 774–805 (LCNATFRRTYVRILTCKWHTRNREGMVRGVYN).

This sequence belongs to the G-protein coupled receptor 1 family. Muscarinic acetylcholine receptor subfamily. In terms of tissue distribution, intense staining in the glomeruli of the antennal lobes, the region of the nervous system containing terminals of antennal olfactory sensory neurons and mechanosensory neurons. Also a discrete group of neurosecretory cells in the pars intercerebralis of the brain.

The protein localises to the cell membrane. It is found in the postsynaptic cell membrane. The muscarinic acetylcholine receptor mediates various cellular responses, including inhibition of adenylate cyclase, breakdown of phosphoinositides and modulation of potassium channels through the action of G proteins. Primary transducing effect is Pi turnover. May have a role in the processing of olfactory and mechanosensory signals; regulation of neurosecretion. The sequence is that of Muscarinic acetylcholine receptor DM1 (mAChR-A) from Drosophila melanogaster (Fruit fly).